Here is a 654-residue protein sequence, read N- to C-terminus: tRNA uridine 5-carboxymethylaminomethyl modification enzyme MnmG (654 aa).

Residue 17–22 coordinates FAD; it reads GGGHAG. An NAD(+)-binding site is contributed by 289–303; sequence GPRYCPSIEDKIVKF.

It belongs to the MnmG family. As to quaternary structure, homodimer. Heterotetramer of two MnmE and two MnmG subunits. FAD serves as cofactor.

The protein localises to the cytoplasm. In terms of biological role, NAD-binding protein involved in the addition of a carboxymethylaminomethyl (cmnm) group at the wobble position (U34) of certain tRNAs, forming tRNA-cmnm(5)s(2)U34. The polypeptide is tRNA uridine 5-carboxymethylaminomethyl modification enzyme MnmG (Prochlorococcus marinus (strain MIT 9515)).